The chain runs to 592 residues: Inactive metallocarboxypeptidase ecm14 (592 aa).

The signal sequence occupies residues 1–22; it reads MYRQDHVFVVLCAVLLAGQVTA. Residues 23-175 constitute a propeptide that is removed on maturation; it reads VPAGTGINPH…AIYESRYPTR (153 aa). Residues 203-524 enclose the Peptidase M14 domain; the sequence is HYQPFNVILQ…NSVLVLGHFL (322 aa). The Zn(2+) site is built by H267 and E270. Residues 267-270, R325, and 342-343 contribute to the substrate site; these read HARE and DR. C336 and C359 are oxidised to a cystine. The N-linked (GlcNAc...) asparagine glycan is linked to N383. A Zn(2+)-binding site is contributed by H399. 400–401 contributes to the substrate binding site; it reads SY. N548 carries an N-linked (GlcNAc...) asparagine glycan.

Belongs to the peptidase M14 family. The cofactor is Zn(2+).

It is found in the vacuole. It localises to the secreted. Its function is as follows. Inactive carboxypeptidase that may play a role in cell wall organization and biogenesis. The polypeptide is Inactive metallocarboxypeptidase ecm14 (ecm14) (Talaromyces stipitatus (strain ATCC 10500 / CBS 375.48 / QM 6759 / NRRL 1006) (Penicillium stipitatum)).